The following is a 207-amino-acid chain: Cytochrome c biogenesis ATP-binding export protein CcmA (207 aa).

One can recognise an ABC transporter domain in the interval 4–207 (LEARELLCER…RISLTQTRAA (204 aa)). 36–43 (GSNGAGKT) serves as a coordination point for ATP.

Belongs to the ABC transporter superfamily. CcmA exporter (TC 3.A.1.107) family. In terms of assembly, the complex is composed of two ATP-binding proteins (CcmA) and two transmembrane proteins (CcmB).

The protein resides in the cell inner membrane. The catalysed reaction is heme b(in) + ATP + H2O = heme b(out) + ADP + phosphate + H(+). In terms of biological role, part of the ABC transporter complex CcmAB involved in the biogenesis of c-type cytochromes; once thought to export heme, this seems not to be the case, but its exact role is uncertain. Responsible for energy coupling to the transport system. The sequence is that of Cytochrome c biogenesis ATP-binding export protein CcmA from Shigella flexneri.